The chain runs to 507 residues: Glycerol kinase (507 aa).

T14 contacts ADP. The ATP site is built by T14, T15, and S16. Position 14 (T14) interacts with sn-glycerol 3-phosphate. R18 lines the ADP pocket. Residues R84, E85, Y137, and D247 each coordinate sn-glycerol 3-phosphate. Residues R84, E85, Y137, D247, and Q248 each coordinate glycerol. 2 residues coordinate ADP: T269 and G312. 4 residues coordinate ATP: T269, G312, Q316, and G413. ADP is bound by residues G413 and N417.

It belongs to the FGGY kinase family.

The catalysed reaction is glycerol + ATP = sn-glycerol 3-phosphate + ADP + H(+). It participates in polyol metabolism; glycerol degradation via glycerol kinase pathway; sn-glycerol 3-phosphate from glycerol: step 1/1. Inhibited by fructose 1,6-bisphosphate (FBP). Functionally, key enzyme in the regulation of glycerol uptake and metabolism. Catalyzes the phosphorylation of glycerol to yield sn-glycerol 3-phosphate. The chain is Glycerol kinase from Psychromonas ingrahamii (strain DSM 17664 / CCUG 51855 / 37).